Consider the following 587-residue polypeptide: Putative phagocytic receptor 1b (587 aa).

The signal sequence occupies residues 1-23 (MRLQILLIYLICIIVSSIVLVES). A run of 9 helical transmembrane segments spans residues 223–243 (LSVM…AIMI), 294–314 (IGWQ…FGMF), 319–339 (GGNM…ISGY), 354–374 (AWNI…VVIL), 390–410 (ILTM…LTVV), 448–468 (ILIA…YIFN), 480–500 (GILC…TVAL), 524–544 (VVFI…MYGL), and 556–576 (IVCF…SLIF).

The protein belongs to the nonaspanin (TM9SF) (TC 9.A.2) family.

The protein resides in the membrane. Its function is as follows. Involved in adhesion and phagocytosis of hydrophilic particles. This Dictyostelium discoideum (Social amoeba) protein is Putative phagocytic receptor 1b (phg1b).